A 926-amino-acid chain; its full sequence is Rap guanine nucleotide exchange factor 3 (926 aa).

Position 79 is a phosphoserine (Ser-79). In terms of domain architecture, DEP spans 110-186 (ATYPTLIRDR…RDAQFYRFPG (77 aa)). An interaction with PDE3B region spans residues 218 to 242 (TVALRKSPGQRTDEELDLIFEELVH). 3',5'-cyclic AMP-binding positions include 311-314 (GQLA) and 321-322 (RA). The tract at residues 369-388 (TSQGAGPSRPPTPGRNRYTV) is disordered. The N-terminal Ras-GEF domain occupies 384–521 (NRYTVMSGTP…EQYPERRRHH (138 aa)). An interaction with PDE3B region spans residues 398 to 422 (ELLLEAMRPDSSAHDPTETFLSDFL). Ser-531 and Ser-867 each carry phosphoserine. Positions 665 to 892 (SAKDLAGQLT…SRISTCSEQS (228 aa)) constitute a Ras-GEF domain.

Interacts with PDE3B and PIK3R6; form a signaling complex that regulates phosphatidylinositol 3-kinase gamma in angiogenesis. As to expression, expressed at low levels in adult brain. Strongly expressed in parts of the neonatal brain, including the septum and the thalamus.

The protein resides in the cytoplasm. The protein localises to the membrane. In terms of biological role, guanine nucleotide exchange factor (GEF) for RAP1A and RAP2A small GTPases that is activated by binding cAMP. Through simultaneous binding of PDE3B to RAPGEF3 and PIK3R6 is assembled in a signaling complex in which it activates the PI3K gamma complex and which is involved in angiogenesis. Plays a role in the modulation of the cAMP-induced dynamic control of endothelial barrier function through a pathway that is independent on Rho-mediated signaling. Required for the actin rearrangement at cell-cell junctions, such as stress fibers and junctional actin. The chain is Rap guanine nucleotide exchange factor 3 (Rapgef3) from Rattus norvegicus (Rat).